The sequence spans 559 residues: Prolyl 4-hydroxylase subunit alpha-1 (559 aa).

Positions 1-16 are cleaved as a signal peptide; it reads MRLALLVLATIGYAVA. N158 carries an N-linked (GlcNAc...) asparagine glycan. The Fe2OG dioxygenase domain maps to 404 to 512; sequence TAEELQIANY…KWVSNKWIHE (109 aa). Residues H422, D424, and H493 each coordinate Fe cation. Position 503 (K503) interacts with 2-oxoglutarate.

It belongs to the P4HA family. In terms of assembly, heterotetramer of two alpha chains and two beta chains. Exists either as a phy-1(2)/pdi-2(2) tetramer or as a phy-1/phy-2/pdi-2(2) tetramer. Fe(2+) is required as a cofactor. The cofactor is L-ascorbate.

It localises to the endoplasmic reticulum lumen. It carries out the reaction L-prolyl-[collagen] + 2-oxoglutarate + O2 = trans-4-hydroxy-L-prolyl-[collagen] + succinate + CO2. Catalyzes the post-translational formation of 4-hydroxyproline in -Xaa-Pro-Gly- sequences in collagens and other proteins. In Caenorhabditis elegans, this protein is Prolyl 4-hydroxylase subunit alpha-1 (dpy-18).